A 1030-amino-acid polypeptide reads, in one-letter code: F-box/WD repeat-containing protein 10 (1030 aa).

One can recognise an F-box domain in the interval 280–329 (RDFIRDLPLHLSKYILRMLDKHSLNRCIFVSQHWATLAQQVKVDQSMHSF). WD repeat units lie at residues 466 to 505 (GHAG…CVRI), 508 to 547 (GHQG…KTFK), 549 to 584 (KDPI…LQKT), 587 to 624 (GHEG…ERCL), and 626 to 667 (AFKH…KVIK). The segment at 709–773 (KNKVKKSKDK…LSSDDMETPV (65 aa)) is disordered. Positions 716–733 (KDKEEEREETSLGDEHSR) are enriched in basic and acidic residues. The segment covering 734-749 (STIQGHSLKDSVSSKQ) has biased composition (polar residues). A coiled-coil region spans residues 963–992 (FMLMTVKEEKEFAEAKMKEYEASVSTKEVD).

In terms of biological role, probable substrate-recognition component of a SCF (SKP1-CUL1-F-box protein)-type E3 ubiquitin ligase complex which mediates the ubiquitination and subsequent proteasomal degradation of target proteins. Overexpression is leading to degradation of CBX5 and CBX1. This chain is F-box/WD repeat-containing protein 10 (Fbxw10), found in Mus musculus (Mouse).